Reading from the N-terminus, the 608-residue chain is Alpha-1,3-galactosidase A (608 aa).

Residues 1–21 (MQRRTFIKSISAMMATSTTLG) form the signal peptide. The N-palmitoyl cysteine moiety is linked to residue cysteine 22. The S-diacylglycerol cysteine moiety is linked to residue cysteine 22. PbH1 repeat units lie at residues 262–292 (TKNTWLENIDIHHSGAMGVIAQLADGIKLDN), 318–340 (KGHVVLKDCLFQGQIDDGTNVHG), 426–448 (PDHVMISGCRFTGNRARGALLTV), 449–470 (SGKIIVENNYFSTPMMAIKIGS), and 481–507 (VESVEIRNNIFDNCNYAKDSSAIDIVP).

The protein belongs to the glycosyl hydrolase 110 family. A subfamily.

The protein localises to the cell membrane. It catalyses the reaction Hydrolysis of terminal, non-reducing branched (1-&gt;3)-alpha-D-galactosidic residues, producing free D-galactose.. The catalysed reaction is Hydrolysis of terminal, non-reducing alpha-D-galactose residues in alpha-D-galactosides, including galactose oligosaccharides, galactomannans and galactolipids.. Functionally, alpha-galactosidase that specifically removes branched alpha-1,3-linked galactose residues present in blood group B antigens. Has no activity toward linear alpha-1,3-linked galactose residues. This chain is Alpha-1,3-galactosidase A (glaA), found in Shewanella woodyi (strain ATCC 51908 / MS32).